Reading from the N-terminus, the 304-residue chain is Dermonecrotic toxin LlSicTox-betaIA1 (304 aa).

The N-terminal stretch at 1–21 (MLLSAVISFIGFAAFLQEANG) is a signal peptide. A propeptide spanning residues 22–26 (HVVER) is cleaved from the precursor. Residue His38 is part of the active site. 2 residues coordinate Mg(2+): Glu58 and Asp60. Catalysis depends on His74, which acts as the Nucleophile. Cystine bridges form between Cys78–Cys84 and Cys80–Cys223. Asp118 serves as a coordination point for Mg(2+).

Belongs to the arthropod phospholipase D family. Class II subfamily. Class IIb sub-subfamily. Mg(2+) is required as a cofactor. As to expression, expressed by the venom gland.

It localises to the secreted. It catalyses the reaction an N-(acyl)-sphingosylphosphocholine = an N-(acyl)-sphingosyl-1,3-cyclic phosphate + choline. It carries out the reaction an N-(acyl)-sphingosylphosphoethanolamine = an N-(acyl)-sphingosyl-1,3-cyclic phosphate + ethanolamine. The enzyme catalyses a 1-acyl-sn-glycero-3-phosphocholine = a 1-acyl-sn-glycero-2,3-cyclic phosphate + choline. The catalysed reaction is a 1-acyl-sn-glycero-3-phosphoethanolamine = a 1-acyl-sn-glycero-2,3-cyclic phosphate + ethanolamine. Dermonecrotic toxins cleave the phosphodiester linkage between the phosphate and headgroup of certain phospholipids (sphingolipid and lysolipid substrates), forming an alcohol (often choline) and a cyclic phosphate. This toxin acts on sphingomyelin (SM) with low activity. It may also act on ceramide phosphoethanolamine (CPE), lysophosphatidylcholine (LPC) and lysophosphatidylethanolamine (LPE), but not on lysophosphatidylserine (LPS), and lysophosphatidylglycerol (LPG). It acts by transphosphatidylation, releasing exclusively cyclic phosphate products as second products. Induces hemolysis, dermonecrosis, and edema. Also induces platelet aggregation. This chain is Dermonecrotic toxin LlSicTox-betaIA1, found in Loxosceles laeta (South American recluse spider).